The sequence spans 210 residues: Somatotropin-1 (210 aa).

The first 22 residues, 1–22 (MARALVLLSVVLVSLLVNQGRA), serve as a signal peptide directing secretion. His-38 contributes to the Zn(2+) binding site. Cys-71 and Cys-183 form a disulfide bridge. Glu-192 serves as a coordination point for Zn(2+). Residues Cys-200 and Cys-208 are joined by a disulfide bond.

It belongs to the somatotropin/prolactin family.

It localises to the secreted. Growth hormone plays an important role in growth control and is involved in the regulation of several anabolic processes. Implicated as an osmoregulatory substance important for seawater adaptation. This chain is Somatotropin-1 (gh1), found in Carassius auratus (Goldfish).